The primary structure comprises 431 residues: Serine--tRNA ligase (431 aa).

238 to 240 (TAE) contacts L-serine. 269–271 (RSE) serves as a coordination point for ATP. Glu292 is a binding site for L-serine. 356–359 (EISS) contributes to the ATP binding site. Position 392 (Ser392) interacts with L-serine.

Belongs to the class-II aminoacyl-tRNA synthetase family. Type-1 seryl-tRNA synthetase subfamily. Homodimer. The tRNA molecule binds across the dimer.

It is found in the cytoplasm. It catalyses the reaction tRNA(Ser) + L-serine + ATP = L-seryl-tRNA(Ser) + AMP + diphosphate + H(+). The enzyme catalyses tRNA(Sec) + L-serine + ATP = L-seryl-tRNA(Sec) + AMP + diphosphate + H(+). It functions in the pathway aminoacyl-tRNA biosynthesis; selenocysteinyl-tRNA(Sec) biosynthesis; L-seryl-tRNA(Sec) from L-serine and tRNA(Sec): step 1/1. Catalyzes the attachment of serine to tRNA(Ser). Is also able to aminoacylate tRNA(Sec) with serine, to form the misacylated tRNA L-seryl-tRNA(Sec), which will be further converted into selenocysteinyl-tRNA(Sec). The protein is Serine--tRNA ligase of Pectobacterium atrosepticum (strain SCRI 1043 / ATCC BAA-672) (Erwinia carotovora subsp. atroseptica).